Here is a 422-residue protein sequence, read N- to C-terminus: 4-hydroxy-3-methylbut-2-en-1-yl diphosphate synthase (flavodoxin) (422 aa).

[4Fe-4S] cluster-binding residues include Cys-316, Cys-319, Cys-362, and Glu-369.

Belongs to the IspG family. [4Fe-4S] cluster serves as cofactor.

The catalysed reaction is (2E)-4-hydroxy-3-methylbut-2-enyl diphosphate + oxidized [flavodoxin] + H2O + 2 H(+) = 2-C-methyl-D-erythritol 2,4-cyclic diphosphate + reduced [flavodoxin]. It participates in isoprenoid biosynthesis; isopentenyl diphosphate biosynthesis via DXP pathway; isopentenyl diphosphate from 1-deoxy-D-xylulose 5-phosphate: step 5/6. Functionally, converts 2C-methyl-D-erythritol 2,4-cyclodiphosphate (ME-2,4cPP) into 1-hydroxy-2-methyl-2-(E)-butenyl 4-diphosphate. This is 4-hydroxy-3-methylbut-2-en-1-yl diphosphate synthase (flavodoxin) from Ehrlichia ruminantium (strain Gardel).